A 328-amino-acid polypeptide reads, in one-letter code: Phosphate acyltransferase (328 aa).

The protein belongs to the PlsX family. In terms of assembly, homodimer. Probably interacts with PlsY.

The protein localises to the cytoplasm. The enzyme catalyses a fatty acyl-[ACP] + phosphate = an acyl phosphate + holo-[ACP]. It participates in lipid metabolism; phospholipid metabolism. Its function is as follows. Catalyzes the reversible formation of acyl-phosphate (acyl-PO(4)) from acyl-[acyl-carrier-protein] (acyl-ACP). This enzyme utilizes acyl-ACP as fatty acyl donor, but not acyl-CoA. This is Phosphate acyltransferase from Campylobacter jejuni (strain RM1221).